Here is a 338-residue protein sequence, read N- to C-terminus: Fructose-1,6-bisphosphatase class 1 1 (338 aa).

Mg(2+) is bound by residues E91, D113, L115, and D116. Substrate-binding positions include 116 to 119, N208, and K274; that span reads DGSS. Mg(2+) is bound at residue E280.

It belongs to the FBPase class 1 family. In terms of assembly, homotetramer. The cofactor is Mg(2+).

It is found in the cytoplasm. The catalysed reaction is beta-D-fructose 1,6-bisphosphate + H2O = beta-D-fructose 6-phosphate + phosphate. It participates in carbohydrate biosynthesis; gluconeogenesis. This chain is Fructose-1,6-bisphosphatase class 1 1, found in Cupriavidus necator (strain ATCC 17699 / DSM 428 / KCTC 22496 / NCIMB 10442 / H16 / Stanier 337) (Ralstonia eutropha).